Reading from the N-terminus, the 507-residue chain is Histidine ammonia-lyase (507 aa).

Residues 141-143 constitute a cross-link (5-imidazolinone (Ala-Gly)); it reads ASG. Ser-142 is subject to 2,3-didehydroalanine (Ser).

This sequence belongs to the PAL/histidase family. In terms of processing, contains an active site 4-methylidene-imidazol-5-one (MIO), which is formed autocatalytically by cyclization and dehydration of residues Ala-Ser-Gly.

The protein localises to the cytoplasm. The catalysed reaction is L-histidine = trans-urocanate + NH4(+). It participates in amino-acid degradation; L-histidine degradation into L-glutamate; N-formimidoyl-L-glutamate from L-histidine: step 1/3. The polypeptide is Histidine ammonia-lyase (Burkholderia cenocepacia (strain ATCC BAA-245 / DSM 16553 / LMG 16656 / NCTC 13227 / J2315 / CF5610) (Burkholderia cepacia (strain J2315))).